The sequence spans 114 residues: Translation initiation factor 1A (114 aa).

An S1-like domain is found at 19–91 (SEFRLPGEGE…EKGDIVHKYE (73 aa)).

The protein belongs to the eIF-1A family.

Seems to be required for maximal rate of protein biosynthesis. Enhances ribosome dissociation into subunits and stabilizes the binding of the initiator Met-tRNA(I) to 40 S ribosomal subunits. The protein is Translation initiation factor 1A (eIF1A) of Pyrobaculum aerophilum (strain ATCC 51768 / DSM 7523 / JCM 9630 / CIP 104966 / NBRC 100827 / IM2).